Here is a 228-residue protein sequence, read N- to C-terminus: Small ribosomal subunit protein uS3 (228 aa).

Positions 39–107 (VREYLQDKLK…PVHINIEEIR (69 aa)) constitute a KH type-2 domain.

The protein belongs to the universal ribosomal protein uS3 family. In terms of assembly, part of the 30S ribosomal subunit. Forms a tight complex with proteins S10 and S14.

Functionally, binds the lower part of the 30S subunit head. Binds mRNA in the 70S ribosome, positioning it for translation. This chain is Small ribosomal subunit protein uS3, found in Pseudomonas fluorescens (strain ATCC BAA-477 / NRRL B-23932 / Pf-5).